The sequence spans 396 residues: MALKKRSKHSKKFKLNLGPQHPATHGVLRLILEMDGEIVERADPHIGLLHRGTEKLIEYKTYLQAIPYFDRLDYVSPMCQEHAFALAIEHLLKCEVPLRAQYIRVMFSELTRILNHTLNIATQALDVGATTPLLWMFEEREKIMEFYERVSGSRLHANYFRPGGVAQDLPEGLIENIVDFCEQFPCKIADLETLLTDNRIWKQRTVDIGIVSKQQAMDWGFSGVMLRGSGIAWDLRKSQPYDQYANLDFDVAIGKNGDCYDRYLIRIEEMYQSIKIIKQCIQKMPVGEIKTQDPSISPPKRSEIKKSMEALINHFKLYSEGYNVPAGEVYAAVEAPKGEFGVYLYSDGTNRPYRCRIKAPGFAHLQGLDFMARGHSLSDIITIIATLDIVFGEIDR.

It belongs to the complex I 49 kDa subunit family. As to quaternary structure, NDH-1 is composed of 14 different subunits. Subunits NuoB, C, D, E, F, and G constitute the peripheral sector of the complex.

The protein localises to the cell inner membrane. It catalyses the reaction a quinone + NADH + 5 H(+)(in) = a quinol + NAD(+) + 4 H(+)(out). Its function is as follows. NDH-1 shuttles electrons from NADH, via FMN and iron-sulfur (Fe-S) centers, to quinones in the respiratory chain. The immediate electron acceptor for the enzyme in this species is believed to be ubiquinone. Couples the redox reaction to proton translocation (for every two electrons transferred, four hydrogen ions are translocated across the cytoplasmic membrane), and thus conserves the redox energy in a proton gradient. The sequence is that of NADH-quinone oxidoreductase subunit D from Orientia tsutsugamushi (strain Boryong) (Rickettsia tsutsugamushi).